The sequence spans 709 residues: Putative extracellular sulfatase Sulf-1 homolog (709 aa).

Residues 1–27 (MISNLRISNYFIIFYVLFLIIPIKVTS) form the signal peptide. Ca(2+) is bound by residues aspartate 43, aspartate 44, and cysteine 79. Catalysis depends on cysteine 79, which acts as the Nucleophile. Cysteine 79 is modified (3-oxoalanine (Cys)). Residues asparagine 103, asparagine 162, and asparagine 189 are each glycosylated (N-linked (GlcNAc...) asparagine). Residues aspartate 308 and histidine 309 each contribute to the Ca(2+) site. Residues asparagine 344, asparagine 468, asparagine 500, asparagine 540, asparagine 566, asparagine 610, and asparagine 620 are each glycosylated (N-linked (GlcNAc...) asparagine).

The protein belongs to the sulfatase family. Ca(2+) is required as a cofactor. In terms of processing, the conversion to 3-oxoalanine (also known as C-formylglycine, FGly), of a serine or cysteine residue in prokaryotes and of a cysteine residue in eukaryotes, is critical for catalytic activity.

It localises to the endoplasmic reticulum. The protein resides in the golgi apparatus. It is found in the golgi stack. Its subcellular location is the cell surface. The polypeptide is Putative extracellular sulfatase Sulf-1 homolog (sul-1) (Caenorhabditis elegans).